The sequence spans 437 residues: Pyrophosphate--fructose 6-phosphate 1-phosphotransferase (437 aa).

Position 27 (glycine 27) interacts with diphosphate. Residue aspartate 122 coordinates Mg(2+). Residues 147–149 (TID), 193–195 (MGR), glutamate 261, and 323–326 (YELR) each bind substrate. The active-site Proton acceptor is the aspartate 149.

Belongs to the phosphofructokinase type A (PFKA) family. PPi-dependent PFK group II subfamily. Clade 'Short' sub-subfamily. Homotetramer. Mg(2+) is required as a cofactor. The cofactor is Mn(2+).

It localises to the cytoplasm. It catalyses the reaction beta-D-fructose 6-phosphate + diphosphate = beta-D-fructose 1,6-bisphosphate + phosphate + H(+). It participates in carbohydrate degradation; glycolysis; D-glyceraldehyde 3-phosphate and glycerone phosphate from D-glucose: step 3/4. Activated by AMP. Probably promotes oligomerization of the enzyme. Its function is as follows. Catalyzes the phosphorylation of D-fructose 6-phosphate, the first committing step of glycolysis. Uses inorganic phosphate (PPi) as phosphoryl donor instead of ATP like common ATP-dependent phosphofructokinases (ATP-PFKs), which renders the reaction reversible, and can thus function both in glycolysis and gluconeogenesis. Consistently, PPi-PFK can replace the enzymes of both the forward (ATP-PFK) and reverse (fructose-bisphosphatase (FBPase)) reactions. This chain is Pyrophosphate--fructose 6-phosphate 1-phosphotransferase, found in Naegleria fowleri (Brain eating amoeba).